Consider the following 409-residue polypeptide: Isocitrate dehydrogenase [NADP] 1 (409 aa).

Residues K75, T78, T80, and R85 each contribute to the NADP(+) site. Mn(2+) is bound by residues D255, D278, and D282. Residues G313, T314, V315, H318, and N331 each contribute to the NADP(+) site.

The protein belongs to the isocitrate and isopropylmalate dehydrogenases family. As to quaternary structure, homodimer. The cofactor is Mg(2+). Mn(2+) serves as cofactor.

It catalyses the reaction D-threo-isocitrate + NADP(+) = 2-oxoglutarate + CO2 + NADPH. Functionally, catalyzes the oxidative decarboxylation of isocitrate to 2-oxoglutarate and carbon dioxide with the concomitant reduction of NADP(+). This chain is Isocitrate dehydrogenase [NADP] 1 (icd), found in Mycobacterium bovis (strain ATCC BAA-935 / AF2122/97).